A 342-amino-acid chain; its full sequence is Pre-mRNA-splicing factor 18 (342 aa).

Residue Met1 is modified to N-acetylmethionine.

Belongs to the PRP18 family. Heterodimer with PPIH. Interacts with PRPF4 and with the spliceosome. Part of a complex containing U4/U6 snRNPs.

Its subcellular location is the nucleus speckle. In terms of biological role, participates in the second step of pre-mRNA splicing. In Mus musculus (Mouse), this protein is Pre-mRNA-splicing factor 18 (Prpf18).